Reading from the N-terminus, the 101-residue chain is Protein translation factor SUI1 homolog (101 aa).

Belongs to the SUI1 family.

In Methanoregula boonei (strain DSM 21154 / JCM 14090 / 6A8), this protein is Protein translation factor SUI1 homolog.